Reading from the N-terminus, the 177-residue chain is KxDL motif-containing protein 1 (177 aa).

Methionine 1 is subject to N-acetylmethionine. The tract at residues 92 to 177 is disordered; that stretch reads ARQHPEAFSH…TDDEEETREE (86 aa). Polar residues predominate over residues 119–145; sequence SITTTIATSEQSTGSCDTSPDTASPSF.

The protein belongs to the KXD1 family. As to quaternary structure, component of the BLOC-one-related complex (BORC) which is composed of BLOC1S1, BLOC1S2, BORCS5, BORCS6, BORCS7, BORCS8, KXD1 and SNAPIN. Associates with the BLOC-1 complex. Interacts with BLOC1S1. Interacts with DTNBP1/BLOC1S7 (via coiled-coil domain).

It is found in the lysosome membrane. As part of the BORC complex may play a role in lysosomes movement and localization at the cell periphery. Associated with the cytosolic face of lysosomes, the BORC complex may recruit ARL8B and couple lysosomes to microtubule plus-end-directed kinesin motor. May also be involved in the biogenesis of lysosome-related organelles such as melanosomes. The sequence is that of KxDL motif-containing protein 1 (Kxd1) from Rattus norvegicus (Rat).